A 310-amino-acid chain; its full sequence is Homoserine kinase (310 aa).

P91–C101 is an ATP binding site.

The protein belongs to the GHMP kinase family. Homoserine kinase subfamily.

The protein localises to the cytoplasm. It carries out the reaction L-homoserine + ATP = O-phospho-L-homoserine + ADP + H(+). It participates in amino-acid biosynthesis; L-threonine biosynthesis; L-threonine from L-aspartate: step 4/5. Catalyzes the ATP-dependent phosphorylation of L-homoserine to L-homoserine phosphate. This chain is Homoserine kinase, found in Shigella sonnei (strain Ss046).